The chain runs to 466 residues: Hydroxyacid-oxoacid transhydrogenase, mitochondrial (466 aa).

The residue at position 444 (K444) is an N6-acetyllysine. S451 carries the phosphoserine modification.

Belongs to the iron-containing alcohol dehydrogenase family. Hydroxyacid-oxoacid transhydrogenase subfamily.

It localises to the mitochondrion. It carries out the reaction (S)-3-hydroxybutanoate + 2-oxoglutarate = (R)-2-hydroxyglutarate + acetoacetate. It catalyses the reaction 4-hydroxybutanoate + 2-oxoglutarate = (R)-2-hydroxyglutarate + succinate semialdehyde. Its function is as follows. Catalyzes the cofactor-independent reversible oxidation of gamma-hydroxybutyrate (GHB) to succinic semialdehyde (SSA) coupled to reduction of 2-ketoglutarate (2-KG) to D-2-hydroxyglutarate (D-2-HG). L-3-hydroxybutyrate (L-3-OHB) is also a substrate for HOT when using 2-KG as hydrogen acceptor, resulting in the formation of D-2-HG. This Bos taurus (Bovine) protein is Hydroxyacid-oxoacid transhydrogenase, mitochondrial (ADHFE1).